Here is a 467-residue protein sequence, read N- to C-terminus: RuvB-like helicase 2 (467 aa).

Residue 73-80 (GPPSTGKT) participates in ATP binding.

It belongs to the RuvB family. As to quaternary structure, may form heterododecamers with RVB1. Component of the SWR1 chromatin remodeling complex, the INO80 chromatin remodeling complex, and of the R2TP complex.

It is found in the nucleus. It carries out the reaction ATP + H2O = ADP + phosphate + H(+). In terms of biological role, DNA helicase which participates in several chromatin remodeling complexes, including the SWR1 and the INO80 complexes. The SWR1 complex mediates the ATP-dependent exchange of histone H2A for the H2A variant HZT1 leading to transcriptional regulation of selected genes by chromatin remodeling. The INO80 complex remodels chromatin by shifting nucleosomes and is involved in DNA repair. Also involved in pre-rRNA processing. The polypeptide is RuvB-like helicase 2 (RVB2) (Kluyveromyces lactis (strain ATCC 8585 / CBS 2359 / DSM 70799 / NBRC 1267 / NRRL Y-1140 / WM37) (Yeast)).